The following is a 449-amino-acid chain: MREILHIQGGQCGNQIGSKFWEVVNLEHGIDQTGRYVGDSELQLERVNVYYNEASCGRYVPRAVLMDLEPGTMDSVRSGPYGQIFRPDNFVFGQSGAGNNWAKGHYTEGAELIDSVLDVVRKEAENCDCLQGFQVCHSLGGGTGSGMGTLLISKIREEYPDRMMMTFSVFPSPKVSDTVVEPYNATLSVHQLVENADECMVLDNEALYDICFRTLKLSTPSFGDLNHLISATMSGVTCCLRFPGQLNSDLRKLAVNLIPFPRLHFFMVGFAPLTSRGSQQYRNLTVPELTQQMWDAKNMMCAADPRHGRYLTASAMFRGKMSTKEVDEQMLNVQNKNSSYFVEWIPNNVKSTVCDIPPTGLKMASTFIGNSTSIQEMFRRVSEQFTAMFRRKAFLHWYTGEGMDEMEFTEAESNMNDLVSEYQQYQDATADEEGEYEEEEAEYEQEETY.

Gln-11, Glu-69, Ser-138, Gly-142, Thr-143, Gly-144, Asn-204, and Asn-226 together coordinate GTP. Residue Glu-69 coordinates Mg(2+). Residues 422 to 449 (YQQYQDATADEEGEYEEEEAEYEQEETY) are disordered. Positions 429-449 (TADEEGEYEEEEAEYEQEETY) are enriched in acidic residues.

Belongs to the tubulin family. Dimer of alpha and beta chains. A typical microtubule is a hollow water-filled tube with an outer diameter of 25 nm and an inner diameter of 15 nM. Alpha-beta heterodimers associate head-to-tail to form protofilaments running lengthwise along the microtubule wall with the beta-tubulin subunit facing the microtubule plus end conferring a structural polarity. Microtubules usually have 13 protofilaments but different protofilament numbers can be found in some organisms and specialized cells. The cofactor is Mg(2+).

The protein resides in the cytoplasm. It localises to the cytoskeleton. Functionally, tubulin is the major constituent of microtubules, a cylinder consisting of laterally associated linear protofilaments composed of alpha- and beta-tubulin heterodimers. Microtubules grow by the addition of GTP-tubulin dimers to the microtubule end, where a stabilizing cap forms. Below the cap, tubulin dimers are in GDP-bound state, owing to GTPase activity of alpha-tubulin. This is Tubulin beta-7 chain (TUBB7) from Arabidopsis thaliana (Mouse-ear cress).